An 86-amino-acid chain; its full sequence is UPF0125 protein bbp_234 (86 aa).

The protein belongs to the UPF0125 (RnfH) family.

This Buchnera aphidicola subsp. Baizongia pistaciae (strain Bp) protein is UPF0125 protein bbp_234.